The following is a 127-amino-acid chain: MNLFTHLFLISCGASLGAMSRHGLTLLLNPLFTFLSFGTLIANYIGCLIMGIMLAMFWHSSAFSTEYRLFFVTGFLGSLTTFSAFSAEVIENLLQHKWLEGITITSLHILGCLFFTTLGVFIWRYFQ.

The next 4 helical transmembrane spans lie at 7 to 27, 37 to 57, 70 to 90, and 102 to 122; these read LFLISCGASLGAMSRHGLTLL, FGTLIANYIGCLIMGIMLAMF, FFVTGFLGSLTTFSAFSAEVI, and ITITSLHILGCLFFTTLGVFI. Positions 77 and 80 each coordinate Na(+).

This sequence belongs to the fluoride channel Fluc/FEX (TC 1.A.43) family.

The protein localises to the cell inner membrane. It carries out the reaction fluoride(in) = fluoride(out). Na(+) is not transported, but it plays an essential structural role and its presence is essential for fluoride channel function. Fluoride-specific ion channel. Important for reducing fluoride concentration in the cell, thus reducing its toxicity. The polypeptide is Fluoride-specific ion channel FluC (Histophilus somni (strain 129Pt) (Haemophilus somnus)).